The following is a 108-amino-acid chain: uncharacterized protein (108 aa).

The helical transmembrane segment at 15–37 threads the bilayer; it reads SYYFYIFWNFFLPMFIVYRGFGL.

Its subcellular location is the membrane. This is an uncharacterized protein from Archaeoglobus fulgidus (strain ATCC 49558 / DSM 4304 / JCM 9628 / NBRC 100126 / VC-16).